A 283-amino-acid chain; its full sequence is Probable replication-associated protein repA1 (283 aa).

It belongs to the IncFII RepA family.

Its function is as follows. This protein is essential for plasmid replication; it is involved in copy control functions. This chain is Probable replication-associated protein repA1 (repA1), found in Buchnera aphidicola subsp. Acyrthosiphon pisum (strain APS) (Acyrthosiphon pisum symbiotic bacterium).